The sequence spans 289 residues: 4-diphosphocytidyl-2-C-methyl-D-erythritol kinase (289 aa).

K15 is an active-site residue. 100–110 provides a ligand contact to ATP; sequence PVSAGLAGGSA. Residue D140 is part of the active site.

It belongs to the GHMP kinase family. IspE subfamily.

It catalyses the reaction 4-CDP-2-C-methyl-D-erythritol + ATP = 4-CDP-2-C-methyl-D-erythritol 2-phosphate + ADP + H(+). It functions in the pathway isoprenoid biosynthesis; isopentenyl diphosphate biosynthesis via DXP pathway; isopentenyl diphosphate from 1-deoxy-D-xylulose 5-phosphate: step 3/6. In terms of biological role, catalyzes the phosphorylation of the position 2 hydroxy group of 4-diphosphocytidyl-2C-methyl-D-erythritol. This chain is 4-diphosphocytidyl-2-C-methyl-D-erythritol kinase, found in Anaplasma marginale (strain Florida).